The chain runs to 158 residues: Molybdopterin synthase catalytic subunit (158 aa).

Substrate contacts are provided by residues 107–108, Lys-123, and 130–132; these read HR and KKE.

It belongs to the MoaE family. MOCS2B subfamily. As to quaternary structure, heterotetramer; composed of 2 small (mocs2s) and 2 large (mocs2l) subunits.

It localises to the cytoplasm. The catalysed reaction is 2 [molybdopterin-synthase sulfur-carrier protein]-C-terminal-Gly-aminoethanethioate + cyclic pyranopterin phosphate + H2O = molybdopterin + 2 [molybdopterin-synthase sulfur-carrier protein]-C-terminal Gly-Gly + 2 H(+). Its pathway is cofactor biosynthesis; molybdopterin biosynthesis. Catalytic subunit of the molybdopterin synthase complex, a complex that catalyzes the conversion of precursor Z into molybdopterin. Acts by mediating the incorporation of 2 sulfur atoms from thiocarboxylated mocs2s into precursor Z to generate a dithiolene group. The chain is Molybdopterin synthase catalytic subunit (mocs2l) from Dictyostelium discoideum (Social amoeba).